Reading from the N-terminus, the 298-residue chain is O-glycoside alpha-1,2-mannosyltransferase homolog 6 (298 aa).

The Nucleophile role is filled by Glu-220.

The protein belongs to the glycosyltransferase 15 family.

It localises to the cytoplasm. The protein localises to the nucleus. Its function is as follows. Probable mannosyltransferase involved in O-glycosylation of cell wall and secreted proteins. The polypeptide is O-glycoside alpha-1,2-mannosyltransferase homolog 6 (omh6) (Schizosaccharomyces pombe (strain 972 / ATCC 24843) (Fission yeast)).